Here is a 265-residue protein sequence, read N- to C-terminus: Urease accessory protein UreH (265 aa).

It belongs to the UreD family. UreH, UreF and UreG form a complex that acts as a GTP-hydrolysis-dependent molecular chaperone, activating the urease apoprotein by helping to assemble the nickel containing metallocenter of UreC. The UreE protein probably delivers the nickel.

It is found in the cytoplasm. Required for maturation of urease via the functional incorporation of the urease nickel metallocenter. The sequence is that of Urease accessory protein UreH from Helicobacter pylori (strain P12).